Here is a 290-residue protein sequence, read N- to C-terminus: Putative beta-lactamase HcpC (290 aa).

The N-terminal stretch at 1–25 is a signal peptide; sequence MLENVKKSFFRVLCLGALCLGGLMA. TPR repeat units follow at residues 29–62, 64–98, 100–133, 134–170, 172–205, 206–242, and 244–278; these read PKELVGLGAKSYKEKDFTQAKKYFEKACDLKENS, CFNLGVLYYQGQGVEKNLKKAASFYAKACDLNYSN, CHLLGNLYYSGQGVSQNTNKALQYYSKACDLKYA, EGCASLGGIYHDGKVVTRDFKKAVEYFTKACDLNDGD, CTILGSLYDAGRGTPKDLKKALASYDKACDLKDS, PGCFNAGNMYHHGEGATKNFKEALARYSKACELENGG, and CFNLGAMQYNGEGVTRNEKQAIENFKKGCKLGAKG. Intrachain disulfides connect C56-C64, C92-C100, C128-C136, C164-C172, C200-C208, C236-C244, and C272-C280.

It belongs to the hcp beta-lactamase family.

It localises to the secreted. The catalysed reaction is a beta-lactam + H2O = a substituted beta-amino acid. In terms of biological role, may hydrolyze 6-aminopenicillinic acid and 7-aminocephalosporanic acid (ACA) derivatives. This Helicobacter pylori (strain ATCC 700392 / 26695) (Campylobacter pylori) protein is Putative beta-lactamase HcpC (hcpC).